A 650-amino-acid polypeptide reads, in one-letter code: Serine/threonine-protein kinase oca2 (650 aa).

Residues 1–14 are compositionally biased toward polar residues; sequence MSVTPPNVQFNLNG. Disordered stretches follow at residues 1–210 and 222–288; these read MSVT…PHDI and HHGK…KSSA. Phosphoserine is present on Ser72. Residues 78 to 98 are compositionally biased toward basic and acidic residues; the sequence is NHIDPKLAEDRYRSSAARHFE. A compositionally biased stretch (polar residues) spans 140–154; sequence PSGSTGYTSPALSQN. Basic residues-rich tracts occupy residues 222–231 and 245–257; these read HHGKHGHHGH and HDKH…HEKH. Positions 258–279 are enriched in basic and acidic residues; the sequence is HSSLDLRRFFKSHQKTDKEKKP. Ser286 is modified (phosphoserine). Residues 302–614 form the Protein kinase domain; sequence GKFGRMLGSG…IHRVFADNWI (313 aa). ATP contacts are provided by residues 308–316 and Lys331; that span reads LGSGAGGSV. Asp425 acts as the Proton acceptor in catalysis. A disordered region spans residues 549–570; the sequence is PIRKTDESHSPNSKTDNSSTHK.

It belongs to the protein kinase superfamily. Ser/Thr protein kinase family.

The protein localises to the cytoplasm. The catalysed reaction is L-seryl-[protein] + ATP = O-phospho-L-seryl-[protein] + ADP + H(+). It catalyses the reaction L-threonyl-[protein] + ATP = O-phospho-L-threonyl-[protein] + ADP + H(+). Functionally, overexpression causes cell cycle arrest. The polypeptide is Serine/threonine-protein kinase oca2 (Schizosaccharomyces pombe (strain 972 / ATCC 24843) (Fission yeast)).